The primary structure comprises 134 residues: Aspartate 1-decarboxylase (134 aa).

The Schiff-base intermediate with substrate; via pyruvic acid role is filled by S25. S25 is modified (pyruvic acid (Ser)). A substrate-binding site is contributed by T57. Y58 functions as the Proton donor in the catalytic mechanism. 73-75 (GAA) contacts substrate.

Belongs to the PanD family. As to quaternary structure, heterooctamer of four alpha and four beta subunits. Pyruvate serves as cofactor. Post-translationally, is synthesized initially as an inactive proenzyme, which is activated by self-cleavage at a specific serine bond to produce a beta-subunit with a hydroxyl group at its C-terminus and an alpha-subunit with a pyruvoyl group at its N-terminus.

The protein resides in the cytoplasm. It catalyses the reaction L-aspartate + H(+) = beta-alanine + CO2. Its pathway is cofactor biosynthesis; (R)-pantothenate biosynthesis; beta-alanine from L-aspartate: step 1/1. Functionally, catalyzes the pyruvoyl-dependent decarboxylation of aspartate to produce beta-alanine. This chain is Aspartate 1-decarboxylase, found in Sulfurihydrogenibium sp. (strain YO3AOP1).